Here is a 448-residue protein sequence, read N- to C-terminus: Tubulin beta-1 chain (448 aa).

The GTP site is built by Gln-11, Glu-69, Ser-138, Gly-142, Thr-143, Gly-144, Asn-204, and Asn-226. Glu-69 contacts Mg(2+). Residues 427-448 (DATADEEGDLQEGESEYIEQEE) are disordered. Positions 429 to 448 (TADEEGDLQEGESEYIEQEE) are enriched in acidic residues.

Belongs to the tubulin family. As to quaternary structure, dimer of alpha and beta chains. A typical microtubule is a hollow water-filled tube with an outer diameter of 25 nm and an inner diameter of 15 nM. Alpha-beta heterodimers associate head-to-tail to form protofilaments running lengthwise along the microtubule wall with the beta-tubulin subunit facing the microtubule plus end conferring a structural polarity. Microtubules usually have 13 protofilaments but different protofilament numbers can be found in some organisms and specialized cells. The cofactor is Mg(2+).

It localises to the cytoplasm. It is found in the cytoskeleton. Functionally, tubulin is the major constituent of microtubules, a cylinder consisting of laterally associated linear protofilaments composed of alpha- and beta-tubulin heterodimers. Microtubules grow by the addition of GTP-tubulin dimers to the microtubule end, where a stabilizing cap forms. Below the cap, tubulin dimers are in GDP-bound state, owing to GTPase activity of alpha-tubulin. The chain is Tubulin beta-1 chain from Brugia pahangi (Filarial nematode worm).